Consider the following 392-residue polypeptide: Acyl-CoA dehydrogenase IpdE1 (392 aa).

FAD contacts are provided by residues 126–129 and S171; that span reads QGYS. Residue E254 is the Proton acceptor of the active site. Position 371–373 (371–373) interacts with FAD; that stretch reads SNE.

It belongs to the acyl-CoA dehydrogenase family. As to quaternary structure, heterotetramer composed of 2 IpdE1 subunits and 2 IpdE2 subunits. Requires FAD as cofactor.

It carries out the reaction 3-[(3aS,4S,5R,7aS)-5-hydroxy-7a-methyl-1-oxo-octahydro-1H-inden-4-yl]propanoyl-CoA + A = (2E)-3-[(3aS,4S,5R,7aS)-5-hydroxy-7a-methyl-1-oxo-octahydro-1H-inden-4-yl]prop-2-enoyl-CoA + AH2. Its pathway is steroid metabolism; cholesterol degradation. In terms of biological role, involved in cholesterol degradation. Catalyzes the dehydrogenation of 5OH-HIP-CoA to 5OH-HIPE-CoA. In Mycolicibacterium smegmatis (strain ATCC 700084 / mc(2)155) (Mycobacterium smegmatis), this protein is Acyl-CoA dehydrogenase IpdE1.